The chain runs to 59 residues: Chromatin protein Cren7 (59 aa).

This sequence belongs to the Cren7 family. As to quaternary structure, monomer. Post-translationally, methylated at multiple sites, to varying extents.

It is found in the chromosome. The protein resides in the cytoplasm. Functionally, a chromatin protein, binds double-stranded DNA without sequence specificity. Constrains negative DNA supercoils. The protein is Chromatin protein Cren7 of Pyrobaculum arsenaticum (strain DSM 13514 / JCM 11321 / PZ6).